The chain runs to 808 residues: Probable phosphoketolase 1 (808 aa).

The protein belongs to the XFP family. Thiamine diphosphate serves as cofactor.

This Nostoc sp. (strain PCC 7120 / SAG 25.82 / UTEX 2576) protein is Probable phosphoketolase 1.